A 220-amino-acid polypeptide reads, in one-letter code: Guanylate kinase (220 aa).

Residues 15-194 (GLMLVISSPS…AFDAVQSIVK (180 aa)) form the Guanylate kinase-like domain. ATP is bound at residue 22–29 (SPSGAGKS).

It belongs to the guanylate kinase family.

The protein resides in the cytoplasm. The enzyme catalyses GMP + ATP = GDP + ADP. Functionally, essential for recycling GMP and indirectly, cGMP. This chain is Guanylate kinase, found in Rhizobium etli (strain ATCC 51251 / DSM 11541 / JCM 21823 / NBRC 15573 / CFN 42).